The primary structure comprises 345 residues: MRVADFTFDLPDELIARYPMAERTASRLLHLDGSTGALADRQFTDILALIEPGDLMIFNNTRVIPARLFGQKASGGKLEILVERMLDDKRILAHVRSSKSPKPGAEIILDGGFKMTMDARHDALFELSLKDDKTILEVLEAVGHMPLPPYIDRPDEDTDKERYQTVYNERPGAVAAPTAGLHFDESILAALKAKGVDMAFVTLHVGAGTFQPVRVDNVLEHKMHSEWAEVPADVVEKIRATKAAGKRVIAVGTTSVRSLESAAKASEGELEPFCGDTDIFIFPGFEFKVVDAMVTNFHLPESTLIMLVSAFAGFDEVIGAYRHAVEQKYRFFSYGDAMFVTKKAP.

This sequence belongs to the QueA family. In terms of assembly, monomer.

Its subcellular location is the cytoplasm. The catalysed reaction is 7-aminomethyl-7-carbaguanosine(34) in tRNA + S-adenosyl-L-methionine = epoxyqueuosine(34) in tRNA + adenine + L-methionine + 2 H(+). Its pathway is tRNA modification; tRNA-queuosine biosynthesis. Transfers and isomerizes the ribose moiety from AdoMet to the 7-aminomethyl group of 7-deazaguanine (preQ1-tRNA) to give epoxyqueuosine (oQ-tRNA). The protein is S-adenosylmethionine:tRNA ribosyltransferase-isomerase of Shewanella amazonensis (strain ATCC BAA-1098 / SB2B).